A 179-amino-acid chain; its full sequence is Large ribosomal subunit protein uL5 (179 aa).

Residue lysine 3 is modified to N6-acetyllysine.

The protein belongs to the universal ribosomal protein uL5 family. As to quaternary structure, part of the 50S ribosomal subunit; part of the 5S rRNA/L5/L18/L25 subcomplex. Contacts the 5S rRNA and the P site tRNA. Forms a bridge to the 30S subunit in the 70S ribosome.

Functionally, this is one of the proteins that bind and probably mediate the attachment of the 5S RNA into the large ribosomal subunit, where it forms part of the central protuberance. In the 70S ribosome it contacts protein S13 of the 30S subunit (bridge B1b), connecting the 2 subunits; this bridge is implicated in subunit movement. Contacts the P site tRNA; the 5S rRNA and some of its associated proteins might help stabilize positioning of ribosome-bound tRNAs. In Escherichia coli O45:K1 (strain S88 / ExPEC), this protein is Large ribosomal subunit protein uL5.